A 1431-amino-acid polypeptide reads, in one-letter code: Gag-Pol polyprotein (1431 aa).

Residue glycine 2 is the site of N-myristoyl glycine; by host attachment. The interval 7–31 (ILRGGKLDAWERIKLKPGGKKHYMM) is interaction with Gp41. An interaction with host CALM1 region spans residues 8–43 (LRGGKLDAWERIKLKPGGKKHYMMKHLVWASRELER). Residues 12-19 (KLDAWERI) form an interaction with host AP3D1 region. Residues 14 to 33 (DAWERIKLKPGGKKHYMMKH) are interaction with membrane phosphatidylinositol 4,5-bisphosphate and RNA. A Nuclear export signal motif is present at residues 16–22 (WERIKLK). The Nuclear localization signal motif lies at 26–32 (KKHYMMK). Residues 73 to 77 (KELIS) form an interaction with membrane phosphatidylinositol 4,5-bisphosphate region. Residues 106-126 (EEQNKSQQKTQQAEAADKGKV) form a disordered region. Tyrosine 130 carries the phosphotyrosine; by host modification. The tract at residues 187-225 (NTVGGHQAAMQMLKDTINEEAAEWDRLHPVHAGPVAPGQ) is interaction with human PPIA/CYPA and NUP153. The segment at 275-361 (YSPVSILDIK…GGPGHKARVL (87 aa)) is dimerization/Multimerization of capsid protein p24. 2 CCHC-type zinc fingers span residues 387–404 (IKCFNCGKEGHLARNCRA) and 408–425 (KGCWKCGKEGHQVKDCTE). Positions 437–461 (FPQGEARKSSSEQNRANSPTRRELQ) are disordered. The interval 485 to 489 (PQITL) is dimerization of protease. The region spanning 504–573 (KEALLDTGAD…TPVNIIGRNM (70 aa)) is the Peptidase A2 domain. The active-site For protease activity; shared with dimeric partner is the aspartate 509. Dimerization of protease stretches follow at residues 533-539 (GIGGFIK) and 572-584 (NMLTQLGCTLNFP). The 191-residue stretch at 627–817 (EGKITKIGPE…PPFLWMGYEL (191 aa)) folds into the Reverse transcriptase domain. Residues aspartate 693, aspartate 768, and aspartate 769 each contribute to the Mg(2+) site. The RT 'primer grip' stretch occupies residues 810 to 818 (FLWMGYELH). Residues 981-997 (WEAWWTDYWQATWIPEW) carry the Tryptophan repeat motif motif. The RNase H type-1 domain maps to 1017–1140 (IAGAETFYVD…VDKLVSSGIR (124 aa)). The Mg(2+) site is built by aspartate 1026, glutamate 1061, aspartate 1081, and aspartate 1132. The Integrase-type zinc-finger motif lies at 1146–1187 (DGINKAQEEHEKYHSNWRAMASEFNLPPIVAKEIVASCDKCQ). Zn(2+) contacts are provided by histidine 1155, histidine 1159, cysteine 1183, and cysteine 1186. One can recognise an Integrase catalytic domain in the interval 1197–1347 (VDCSPGIWQL…SAGERIIDII (151 aa)). Aspartate 1207, aspartate 1259, and glutamate 1295 together coordinate Mg(2+). Residues 1366–1413 (FRVYYRDSRDPIWKGPAKLLWKGEGAVVLQDNSDIKVVPRRKVKIIKD) constitute a DNA-binding region (integrase-type).

As to quaternary structure, homotrimer; further assembles as hexamers of trimers. Interacts with gp41 (via C-terminus). Interacts with host CALM1; this interaction induces a conformational change in the Matrix protein, triggering exposure of the myristate group. Interacts with host AP3D1; this interaction allows the polyprotein trafficking to multivesicular bodies during virus assembly. Part of the pre-integration complex (PIC) which is composed of viral genome, matrix protein, Vpr and integrase. In terms of assembly, homodimer; the homodimer further multimerizes as homohexamers or homopentamers. Interacts with human PPIA/CYPA; This interaction stabilizes the capsid. Interacts with human NUP153. Interacts with host PDZD8; this interaction stabilizes the capsid. Interacts with monkey TRIM5; this interaction destabilizes the capsid. Homodimer, whose active site consists of two apposed aspartic acid residues. As to quaternary structure, heterodimer of p66 RT and p51 RT (RT p66/p51). Heterodimerization of RT is essential for DNA polymerase activity. The overall folding of the subdomains is similar in p66 RT and p51 RT but the spatial arrangements of the subdomains are dramatically different. In terms of assembly, homotetramer; may further associate as a homohexadecamer. Part of the pre-integration complex (PIC) which is composed of viral genome, matrix protein, Vpr and integrase. Interacts with human SMARCB1/INI1 and human PSIP1/LEDGF isoform 1. Interacts with human KPNA3; this interaction might play a role in nuclear import of the pre-integration complex. Interacts with human NUP153; this interaction might play a role in nuclear import of the pre-integration complex. Mg(2+) serves as cofactor. Specific enzymatic cleavages by the viral protease yield mature proteins. The protease is released by autocatalytic cleavage. The polyprotein is cleaved during and after budding, this process is termed maturation. Proteolytic cleavage of p66 RT removes the RNase H domain to yield the p51 RT subunit. Nucleocapsid protein p7 might be further cleaved after virus entry. Post-translationally, tyrosine phosphorylated presumably in the virion by a host kinase. Phosphorylation is apparently not a major regulator of membrane association. In terms of processing, phosphorylated possibly by host MAPK1; this phosphorylation is necessary for Pin1-mediated virion uncoating. Methylated by host PRMT6, impairing its function by reducing RNA annealing and the initiation of reverse transcription.

The protein localises to the host cell membrane. It localises to the host endosome. Its subcellular location is the host multivesicular body. The protein resides in the virion membrane. It is found in the host nucleus. The protein localises to the host cytoplasm. It localises to the virion. The enzyme catalyses Specific for a P1 residue that is hydrophobic, and P1' variable, but often Pro.. It carries out the reaction Endohydrolysis of RNA in RNA/DNA hybrids. Three different cleavage modes: 1. sequence-specific internal cleavage of RNA. Human immunodeficiency virus type 1 and Moloney murine leukemia virus enzymes prefer to cleave the RNA strand one nucleotide away from the RNA-DNA junction. 2. RNA 5'-end directed cleavage 13-19 nucleotides from the RNA end. 3. DNA 3'-end directed cleavage 15-20 nucleotides away from the primer terminus.. It catalyses the reaction 3'-end directed exonucleolytic cleavage of viral RNA-DNA hybrid.. The catalysed reaction is DNA(n) + a 2'-deoxyribonucleoside 5'-triphosphate = DNA(n+1) + diphosphate. With respect to regulation, protease: The viral protease is inhibited by many synthetic protease inhibitors (PIs), such as amprenavir, atazanavir, indinavir, loprinavir, nelfinavir, ritonavir and saquinavir. Use of protease inhibitors in tritherapy regimens permit more ambitious therapeutic strategies. Reverse transcriptase/ribonuclease H: RT can be inhibited either by nucleoside RT inhibitors (NRTIs) or by non nucleoside RT inhibitors (NNRTIs). NRTIs act as chain terminators, whereas NNRTIs inhibit DNA polymerization by binding a small hydrophobic pocket near the RT active site and inducing an allosteric change in this region. Classical NRTIs are abacavir, adefovir (PMEA), didanosine (ddI), lamivudine (3TC), stavudine (d4T), tenofovir (PMPA), zalcitabine (ddC), and zidovudine (AZT). Classical NNRTIs are atevirdine (BHAP U-87201E), delavirdine, efavirenz (DMP-266), emivirine (I-EBU), and nevirapine (BI-RG-587). The tritherapies used as a basic effective treatment of AIDS associate two NRTIs and one NNRTI. Mediates, with Gag polyprotein, the essential events in virion assembly, including binding the plasma membrane, making the protein-protein interactions necessary to create spherical particles, recruiting the viral Env proteins, and packaging the genomic RNA via direct interactions with the RNA packaging sequence (Psi). Gag-Pol polyprotein may regulate its own translation, by the binding genomic RNA in the 5'-UTR. At low concentration, the polyprotein would promote translation, whereas at high concentration, the polyprotein would encapsidate genomic RNA and then shut off translation. In terms of biological role, targets the polyprotein to the plasma membrane via a multipartite membrane-binding signal, that includes its myristoylated N-terminus. Matrix protein is part of the pre-integration complex. Implicated in the release from host cell mediated by Vpu. Binds to RNA. Its function is as follows. Forms the conical core that encapsulates the genomic RNA-nucleocapsid complex in the virion. Most core are conical, with only 7% tubular. The core is constituted by capsid protein hexamer subunits. The core is disassembled soon after virion entry. Host restriction factors such as TRIM5-alpha or TRIMCyp bind retroviral capsids and cause premature capsid disassembly, leading to blocks in reverse transcription. Capsid restriction by TRIM5 is one of the factors which restricts HIV-1 to the human species. Host PIN1 apparently facilitates the virion uncoating. On the other hand, interactions with PDZD8 or CYPA stabilize the capsid. Functionally, encapsulates and protects viral dimeric unspliced genomic RNA (gRNA). Binds these RNAs through its zinc fingers. Acts as a nucleic acid chaperone which is involved in rearangement of nucleic acid secondary structure during gRNA retrotranscription. Also facilitates template switch leading to recombination. As part of the polyprotein, participates in gRNA dimerization, packaging, tRNA incorporation and virion assembly. Aspartyl protease that mediates proteolytic cleavages of Gag and Gag-Pol polyproteins during or shortly after the release of the virion from the plasma membrane. Cleavages take place as an ordered, step-wise cascade to yield mature proteins. This process is called maturation. Displays maximal activity during the budding process just prior to particle release from the cell. Also cleaves Nef and Vif, probably concomitantly with viral structural proteins on maturation of virus particles. Hydrolyzes host EIF4GI and PABP1 in order to shut off the capped cellular mRNA translation. The resulting inhibition of cellular protein synthesis serves to ensure maximal viral gene expression and to evade host immune response. Also mediates cleavage of host YTHDF3. Mediates cleavage of host CARD8, thereby activating the CARD8 inflammasome, leading to the clearance of latent HIV-1 in patient CD4(+) T-cells after viral reactivation; in contrast, HIV-1 can evade CARD8-sensing when its protease remains inactive in infected cells prior to viral budding. In terms of biological role, multifunctional enzyme that converts the viral RNA genome into dsDNA in the cytoplasm, shortly after virus entry into the cell. This enzyme displays a DNA polymerase activity that can copy either DNA or RNA templates, and a ribonuclease H (RNase H) activity that cleaves the RNA strand of RNA-DNA heteroduplexes in a partially processive 3' to 5' endonucleasic mode. Conversion of viral genomic RNA into dsDNA requires many steps. A tRNA(3)-Lys binds to the primer-binding site (PBS) situated at the 5'-end of the viral RNA. RT uses the 3' end of the tRNA primer to perform a short round of RNA-dependent minus-strand DNA synthesis. The reading proceeds through the U5 region and ends after the repeated (R) region which is present at both ends of viral RNA. The portion of the RNA-DNA heteroduplex is digested by the RNase H, resulting in a ssDNA product attached to the tRNA primer. This ssDNA/tRNA hybridizes with the identical R region situated at the 3' end of viral RNA. This template exchange, known as minus-strand DNA strong stop transfer, can be either intra- or intermolecular. RT uses the 3' end of this newly synthesized short ssDNA to perform the RNA-dependent minus-strand DNA synthesis of the whole template. RNase H digests the RNA template except for two polypurine tracts (PPTs) situated at the 5'-end and near the center of the genome. It is not clear if both polymerase and RNase H activities are simultaneous. RNase H probably can proceed both in a polymerase-dependent (RNA cut into small fragments by the same RT performing DNA synthesis) and a polymerase-independent mode (cleavage of remaining RNA fragments by free RTs). Secondly, RT performs DNA-directed plus-strand DNA synthesis using the PPTs that have not been removed by RNase H as primers. PPTs and tRNA primers are then removed by RNase H. The 3' and 5' ssDNA PBS regions hybridize to form a circular dsDNA intermediate. Strand displacement synthesis by RT to the PBS and PPT ends produces a blunt ended, linear dsDNA copy of the viral genome that includes long terminal repeats (LTRs) at both ends. Its function is as follows. Catalyzes viral DNA integration into the host chromosome, by performing a series of DNA cutting and joining reactions. This enzyme activity takes place after virion entry into a cell and reverse transcription of the RNA genome in dsDNA. The first step in the integration process is 3' processing. This step requires a complex comprising the viral genome, matrix protein, Vpr and integrase. This complex is called the pre-integration complex (PIC). The integrase protein removes 2 nucleotides from each 3' end of the viral DNA, leaving recessed CA OH's at the 3' ends. In the second step, the PIC enters cell nucleus. This process is mediated through integrase and Vpr proteins, and allows the virus to infect a non dividing cell. This ability to enter the nucleus is specific of lentiviruses, other retroviruses cannot and rely on cell division to access cell chromosomes. In the third step, termed strand transfer, the integrase protein joins the previously processed 3' ends to the 5' ends of strands of target cellular DNA at the site of integration. The 5'-ends are produced by integrase-catalyzed staggered cuts, 5 bp apart. A Y-shaped, gapped, recombination intermediate results, with the 5'-ends of the viral DNA strands and the 3' ends of target DNA strands remaining unjoined, flanking a gap of 5 bp. The last step is viral DNA integration into host chromosome. This involves host DNA repair synthesis in which the 5 bp gaps between the unjoined strands are filled in and then ligated. Since this process occurs at both cuts flanking the HIV genome, a 5 bp duplication of host DNA is produced at the ends of HIV-1 integration. Alternatively, Integrase may catalyze the excision of viral DNA just after strand transfer, this is termed disintegration. This chain is Gag-Pol polyprotein (gag-pol), found in Homo sapiens (Human).